Reading from the N-terminus, the 83-residue chain is MAHKKSGGVAKNGRDSLPKYLGVKVGDGQFVKAGNILVRQRGTRFHPGKNVGMGRDFTLFALKDGRVKFEQKNNKKYVSVYEE.

It belongs to the bacterial ribosomal protein bL27 family.

This chain is Large ribosomal subunit protein bL27, found in Thermotoga neapolitana (strain ATCC 49049 / DSM 4359 / NBRC 107923 / NS-E).